The sequence spans 341 residues: Methionine import ATP-binding protein MetN 3 (341 aa).

Residues isoleucine 2–isoleucine 241 enclose the ABC transporter domain. An ATP-binding site is contributed by glycine 38 to serine 45.

This sequence belongs to the ABC transporter superfamily. Methionine importer (TC 3.A.1.24) family. In terms of assembly, the complex is composed of two ATP-binding proteins (MetN), two transmembrane proteins (MetI) and a solute-binding protein (MetQ).

It is found in the cell membrane. It carries out the reaction L-methionine(out) + ATP + H2O = L-methionine(in) + ADP + phosphate + H(+). It catalyses the reaction D-methionine(out) + ATP + H2O = D-methionine(in) + ADP + phosphate + H(+). Functionally, part of the ABC transporter complex MetNIQ involved in methionine import. Responsible for energy coupling to the transport system. The chain is Methionine import ATP-binding protein MetN 3 from Oceanobacillus iheyensis (strain DSM 14371 / CIP 107618 / JCM 11309 / KCTC 3954 / HTE831).